The chain runs to 261 residues: Hemin import ATP-binding protein HmuV (261 aa).

An ABC transporter domain is found at 3-239 (LDAADITVKL…AILSQAYGCA (237 aa)). 35–42 (GPNGSGKT) provides a ligand contact to ATP.

It belongs to the ABC transporter superfamily. Heme (hemin) importer (TC 3.A.1.14.5) family. In terms of assembly, the complex is composed of two ATP-binding proteins (HmuV), two transmembrane proteins (HmuU) and a solute-binding protein (HmuT).

It is found in the cell inner membrane. Its function is as follows. Part of the ABC transporter complex HmuTUV involved in hemin import. Responsible for energy coupling to the transport system. The protein is Hemin import ATP-binding protein HmuV of Roseobacter denitrificans (strain ATCC 33942 / OCh 114) (Erythrobacter sp. (strain OCh 114)).